A 156-amino-acid chain; its full sequence is Small ribosomal subunit protein uS7 (156 aa).

The protein belongs to the universal ribosomal protein uS7 family. In terms of assembly, part of the 30S ribosomal subunit. Contacts proteins S9 and S11.

Its function is as follows. One of the primary rRNA binding proteins, it binds directly to 16S rRNA where it nucleates assembly of the head domain of the 30S subunit. Is located at the subunit interface close to the decoding center, probably blocks exit of the E-site tRNA. In Aliivibrio fischeri (strain MJ11) (Vibrio fischeri), this protein is Small ribosomal subunit protein uS7.